The sequence spans 464 residues: Asparagine--tRNA ligase (464 aa).

This sequence belongs to the class-II aminoacyl-tRNA synthetase family. In terms of assembly, homodimer.

The protein localises to the cytoplasm. The catalysed reaction is tRNA(Asn) + L-asparagine + ATP = L-asparaginyl-tRNA(Asn) + AMP + diphosphate + H(+). This chain is Asparagine--tRNA ligase, found in Clostridium botulinum (strain Eklund 17B / Type B).